The following is a 101-amino-acid chain: DNA-binding protein Fis (101 aa).

A DNA-binding region (H-T-H motif) is located at residues 77 to 96 (QTRAANMLGINRGTLRKKLK).

The protein belongs to the transcriptional regulatory Fis family. Homodimer.

Functionally, activates ribosomal RNA transcription. Plays a direct role in upstream activation of rRNA promoters. The sequence is that of DNA-binding protein Fis from Shewanella sediminis (strain HAW-EB3).